The sequence spans 463 residues: L-seryl-tRNA(Sec) selenium transferase (463 aa).

Position 295 is an N6-(pyridoxal phosphate)lysine (lysine 295).

It belongs to the SelA family. In terms of assembly, homodecamer; pentamer of dimers. Binds only one seryl-tRNA(Sec) per dimer. It depends on pyridoxal 5'-phosphate as a cofactor.

The protein localises to the cytoplasm. The catalysed reaction is L-seryl-tRNA(Sec) + selenophosphate + H(+) = L-selenocysteinyl-tRNA(Sec) + phosphate. It functions in the pathway aminoacyl-tRNA biosynthesis; selenocysteinyl-tRNA(Sec) biosynthesis; selenocysteinyl-tRNA(Sec) from L-seryl-tRNA(Sec) (bacterial route): step 1/1. Its function is as follows. Converts seryl-tRNA(Sec) to selenocysteinyl-tRNA(Sec) required for selenoprotein biosynthesis. The polypeptide is L-seryl-tRNA(Sec) selenium transferase (Shigella sonnei (strain Ss046)).